A 517-amino-acid chain; its full sequence is FERM domain-containing protein 5 (517 aa).

One can recognise an FERM domain in the interval 17 to 298; the sequence is YSCTVRLLDD…ENQAFYKLEK (282 aa). The segment at 308-353 is interaction with ROCK1; sequence SNLFFKGSRFRYSGRVAKEVMESSAKIKREPPEIHRAGMVPSRSCP. Residues 344–367 form a disordered region; that stretch reads AGMVPSRSCPSITHGPRLSSVPRT. Residue serine 375 is modified to Phosphoserine. Disordered regions lie at residues 385–408 and 485–517; these read DSAH…VRSS and GHGG…VPLD. Residues 388-398 show a composition bias toward polar residues; it reads HSTPVRSSSHG. Over residues 498 to 517 the composition is skewed to low complexity; sequence KGPQLQQQQWKGWGKSVPLD.

Interacts with CTNND1, ITGB5 (via cytoplasmic domain) and ROCK1.

It is found in the cell junction. Its subcellular location is the adherens junction. In terms of biological role, may be involved in regulation of cell migration. May regulate cell-matrix interactions via its interaction with ITGB5 and modifying ITGB5 cytoplasmic tail interactions such as with FERMT2 and TLN1. May regulate ROCK1 kinase activity possibly involved in regulation of actin stress fiber formation. The sequence is that of FERM domain-containing protein 5 (Frmd5) from Mus musculus (Mouse).